A 209-amino-acid polypeptide reads, in one-letter code: Chaperone protein TorD (209 aa).

It belongs to the TorD/DmsD family. TorD subfamily.

The protein localises to the cytoplasm. Functionally, involved in the biogenesis of TorA. Acts on TorA before the insertion of the molybdenum cofactor and, as a result, probably favors a conformation of the apoenzyme that is competent for acquiring the cofactor. The protein is Chaperone protein TorD of Shewanella baltica (strain OS185).